Here is a 458-residue protein sequence, read N- to C-terminus: UDP-N-acetylmuramate--L-alanine ligase (458 aa).

ATP is bound at residue 118 to 124; the sequence is GTHGKTT.

The protein belongs to the MurCDEF family.

Its subcellular location is the cytoplasm. The catalysed reaction is UDP-N-acetyl-alpha-D-muramate + L-alanine + ATP = UDP-N-acetyl-alpha-D-muramoyl-L-alanine + ADP + phosphate + H(+). Its pathway is cell wall biogenesis; peptidoglycan biosynthesis. Functionally, cell wall formation. This Clostridium botulinum (strain Loch Maree / Type A3) protein is UDP-N-acetylmuramate--L-alanine ligase.